Consider the following 81-residue polypeptide: EC protein I/II (81 aa).

This sequence belongs to the metallothionein superfamily. Type 15 family.

Its function is as follows. Binds 5 molecules of zinc. May have a role in Zn(2+) homeostasis during embryogenesis. In Triticum aestivum (Wheat), this protein is EC protein I/II.